The sequence spans 82 residues: Small ribosomal subunit protein bS18 (82 aa).

The tract at residues 1–20 is disordered; that stretch reads MVDINQIPTRRPFHRRRKTC.

This sequence belongs to the bacterial ribosomal protein bS18 family. Part of the 30S ribosomal subunit. Forms a tight heterodimer with protein bS6.

Its function is as follows. Binds as a heterodimer with protein bS6 to the central domain of the 16S rRNA, where it helps stabilize the platform of the 30S subunit. This is Small ribosomal subunit protein bS18 from Chelativorans sp. (strain BNC1).